The following is an 87-amino-acid chain: U24 protein (87 aa).

A Phosphothreonine modification is found at Thr-6. Positions 8-11 match the PPXY motif motif; that stretch reads PPSY. A helical membrane pass occupies residues 59–79; that stretch reads FLVLTGLAIAMILFIVFVLYV.

In terms of assembly, interacts with host ITCH; this interaction probably mediates ITCH degradation. Interacts probably with NEDD4.

The protein resides in the membrane. Its function is as follows. Down-regulates the TCR/CD3E complex and the transferrin receptor TFRC in host T-cells by blocking them from recycling back to the cell surface. The polypeptide is U24 protein (U24) (Homo sapiens (Human)).